The primary structure comprises 416 residues: Serine/threonine transporter SstT (416 aa).

A run of 9 helical transmembrane segments spans residues 15 to 35 (SLVSQILVGLVFGILLAMFMP), 49 to 69 (VGALKAVAPLLVFVLVMAAII), 82 to 102 (ILLLYLLGTFLAAAVAVVASF), 141 to 161 (ALLDANYIGILAWAIGLGIAM), 192 to 212 (LGILGLVASTLAETGFDALFG), 217 to 237 (LVVLIGCMLFIAFVVNPLIVF), 288 to 308 (VSIPLGATINMAGAAITITVL), 316 to 336 (LGMEVDLATAILLSVVATISA), and 363 to 383 (IAMQVVAVGFIIGVLQDSAET).

It belongs to the dicarboxylate/amino acid:cation symporter (DAACS) (TC 2.A.23) family.

It is found in the cell inner membrane. The catalysed reaction is L-serine(in) + Na(+)(in) = L-serine(out) + Na(+)(out). The enzyme catalyses L-threonine(in) + Na(+)(in) = L-threonine(out) + Na(+)(out). In terms of biological role, involved in the import of serine and threonine into the cell, with the concomitant import of sodium (symport system). The sequence is that of Serine/threonine transporter SstT from Aeromonas hydrophila subsp. hydrophila (strain ATCC 7966 / DSM 30187 / BCRC 13018 / CCUG 14551 / JCM 1027 / KCTC 2358 / NCIMB 9240 / NCTC 8049).